A 265-amino-acid polypeptide reads, in one-letter code: MVKWLYQLFIELTNHAWTSKCLASFTRSKWSRLFISSYAKVYKINKEEMEKKLHEYETLQQLFVRTLKKGLRPIDTHPDSVVSPVDAVIEDVGIITDQKEIIVKGKTYSIREMLGDDQIAEKYLHGTFIILYLSPSHYHRIHSPICGEVVKQWELGGKSYPVNRLGLKYGKAPLSKNYRRITELYTNGMYTAIVKVGAMFVNSIELTHEHDHVKKGEEIGYFSFGSTVVLLFEKDVFTLDEQIVPPFEVKMGQRIGFLAQKKKSQ.

Residues Asp-86, His-142, and Ser-226 each act as charge relay system; for autoendoproteolytic cleavage activity in the active site. The active-site Schiff-base intermediate with substrate; via pyruvic acid; for decarboxylase activity is the Ser-226. At Ser-226 the chain carries Pyruvic acid (Ser); by autocatalysis.

It belongs to the phosphatidylserine decarboxylase family. PSD-B subfamily. Prokaryotic type I sub-subfamily. As to quaternary structure, heterodimer of a large membrane-associated beta subunit and a small pyruvoyl-containing alpha subunit. Pyruvate is required as a cofactor. Post-translationally, is synthesized initially as an inactive proenzyme. Formation of the active enzyme involves a self-maturation process in which the active site pyruvoyl group is generated from an internal serine residue via an autocatalytic post-translational modification. Two non-identical subunits are generated from the proenzyme in this reaction, and the pyruvate is formed at the N-terminus of the alpha chain, which is derived from the carboxyl end of the proenzyme. The autoendoproteolytic cleavage occurs by a canonical serine protease mechanism, in which the side chain hydroxyl group of the serine supplies its oxygen atom to form the C-terminus of the beta chain, while the remainder of the serine residue undergoes an oxidative deamination to produce ammonia and the pyruvoyl prosthetic group on the alpha chain. During this reaction, the Ser that is part of the protease active site of the proenzyme becomes the pyruvoyl prosthetic group, which constitutes an essential element of the active site of the mature decarboxylase.

It localises to the cell membrane. It catalyses the reaction a 1,2-diacyl-sn-glycero-3-phospho-L-serine + H(+) = a 1,2-diacyl-sn-glycero-3-phosphoethanolamine + CO2. The protein operates within phospholipid metabolism; phosphatidylethanolamine biosynthesis; phosphatidylethanolamine from CDP-diacylglycerol: step 2/2. In terms of biological role, catalyzes the formation of phosphatidylethanolamine (PtdEtn) from phosphatidylserine (PtdSer). The sequence is that of Phosphatidylserine decarboxylase proenzyme from Anoxybacillus flavithermus (strain DSM 21510 / WK1).